The primary structure comprises 559 residues: Excitatory amino acid transporter 5 (559 aa).

At 1–16 (MVLDAVLARGRTVCKH) the chain is on the cytoplasmic side. Helical transmembrane passes span 17–37 (NGLL…GFFL), 60–80 (MLKM…LASL), and 94–114 (AYYL…VSII). Over 115–215 (HPGGAAQKET…EIVYKSEPGT (101 aa)) the chain is Extracellular. A glycan (N-linked (GlcNAc...) asparagine) is linked at Asn-190. The helical transmembrane segment at 216 to 236 (SDGMNVLGIVIFSATMGIMLG) threads the bilayer. A glycan (N-linked (GlcNAc...) asparagine) is linked at Asn-253. Helical transmembrane passes span 259-279 (IVAV…AGKI), 298-318 (TVVC…YFLI), 329-349 (GVLQ…TLPI), 371-391 (VGAT…AIFI), 413-433 (AASI…VIVL), and 456-476 (FRTM…AHIC).

It belongs to the dicarboxylate/amino acid:cation symporter (DAACS) (TC 2.A.23) family. SLC1A7 subfamily. In terms of assembly, interacts with the PDZ domains of DLG4. Expressed in retina, located in both cone and rod photoreceptor terminals and in axon terminals of rod bipolar cells.

The protein resides in the photoreceptor inner segment membrane. Its subcellular location is the synaptic cell membrane. The enzyme catalyses K(+)(in) + L-glutamate(out) + 3 Na(+)(out) + H(+)(out) = K(+)(out) + L-glutamate(in) + 3 Na(+)(in) + H(+)(in). It catalyses the reaction K(+)(in) + L-aspartate(out) + 3 Na(+)(out) + H(+)(out) = K(+)(out) + L-aspartate(in) + 3 Na(+)(in) + H(+)(in). The catalysed reaction is D-aspartate(out) + K(+)(in) + 3 Na(+)(out) + H(+)(out) = D-aspartate(in) + K(+)(out) + 3 Na(+)(in) + H(+)(in). In terms of biological role, sodium-dependent, high-affinity amino acid transporter that mediates the uptake of L-glutamate and also L-aspartate and D-aspartate. Functions as a symporter that transports one amino acid molecule together with two or three Na(+) ions and one proton, in parallel with the counter-transport of one K(+) ion. Acts primarily as an inhibitory glutamate-gated chloride channel being a major inhibitory presynaptic receptor at mammalian rod bipolar cell axon terminals. Glutamate binding gates a large Cl(-) conductance that mediates inhibition, affecting visual processing in the retina. The sequence is that of Excitatory amino acid transporter 5 from Mus musculus (Mouse).